A 470-amino-acid polypeptide reads, in one-letter code: DNA primase large subunit (470 aa).

[4Fe-4S] cluster-binding residues include C279, C358, C376, and C414. The disordered stretch occupies residues E449–K470.

It belongs to the eukaryotic-type primase large subunit family. Heterodimer of a small subunit and a large subunit. Requires [4Fe-4S] cluster as cofactor.

DNA primase is the polymerase that synthesizes small RNA primers for the Okazaki fragments made during discontinuous DNA replication. This is DNA primase large subunit (prim2) from Dictyostelium discoideum (Social amoeba).